Reading from the N-terminus, the 250-residue chain is 3-deoxy-manno-octulosonate cytidylyltransferase 1 (250 aa).

This sequence belongs to the KdsB family.

The protein resides in the cytoplasm. It carries out the reaction 3-deoxy-alpha-D-manno-oct-2-ulosonate + CTP = CMP-3-deoxy-beta-D-manno-octulosonate + diphosphate. It participates in nucleotide-sugar biosynthesis; CMP-3-deoxy-D-manno-octulosonate biosynthesis; CMP-3-deoxy-D-manno-octulosonate from 3-deoxy-D-manno-octulosonate and CTP: step 1/1. Its pathway is bacterial outer membrane biogenesis; lipopolysaccharide biosynthesis. Functionally, activates KDO (a required 8-carbon sugar) for incorporation into bacterial lipopolysaccharide in Gram-negative bacteria. The sequence is that of 3-deoxy-manno-octulosonate cytidylyltransferase 1 from Actinobacillus pleuropneumoniae serotype 5b (strain L20).